A 557-amino-acid chain; its full sequence is Fatty acyl-CoA hydrolase precursor, medium chain (557 aa).

A signal peptide spans 1-25; sequence MATEKNTLLSLILTAGITALVATGQ. Residues C93 and C122 are joined by a disulfide bond. The active-site Acyl-ester intermediate is S227. Residues E345 and H460 each act as charge relay system in the active site. N476 is a glycosylation site (N-linked (GlcNAc...) asparagine).

Belongs to the type-B carboxylesterase/lipase family. In terms of tissue distribution, highest levels in uropygial gland, much lower in liver and kidney.

Its function is as follows. Fatty acid biosynthesis chain termination and release of the free fatty acid product is achieved by hydrolysis of the thio ester by a thioesterase. This thioesterase may be associated with peroxisome proliferation and may play a role in the production of 3-hydroxy fatty acid diester pheromones. The chain is Fatty acyl-CoA hydrolase precursor, medium chain from Anas platyrhynchos (Mallard).